Reading from the N-terminus, the 40-residue chain is Large ribosomal subunit protein bL36B (40 aa).

It belongs to the bacterial ribosomal protein bL36 family.

The chain is Large ribosomal subunit protein bL36B from Clavibacter michiganensis subsp. michiganensis (strain NCPPB 382).